A 440-amino-acid chain; its full sequence is MSYATKIHARYVYDSRGNPTVEVDFTTDKGLFRSIVPSGASTGVHEALELRDGDKSKWLGKGVLKAVANVNDIIAPALIKAKIDVVDQAKIDEFLLSLDGTPNKSKLGANAILGVSLAAANAAAAAQGIPLYKHIANISNAKKGKFVLPVPFQNVLNGGSHAGGALAFQEFMIAPTGVSTFSEALRIGSEVYHNLKSLTKKKYGQSAGNVGDEGGVAPDIKTPKEALDLIMDAIDKAGYKGKVGIAMDVASSEFYKDGKYDLDFKNPESDPSKWLSGPQLADLYEQLISEYPIVSIEDPFAEDDWDAWVHFFERVGDKIQIVGDDLTVTNPTRIKTAIEKKAANALLLKVNQIGTLTESIQAANDSYAAGWGVMVSHRSGETEDTFIADLSVGLRSGQIKTGAPARSERLAKLNQILRIEEELGSEAIYAGKDFQKASQL.

Positions 161 and 170 each coordinate substrate. The Proton donor role is filled by Glu213. Positions 248, 297, and 324 each coordinate Mg(2+). Residues Glu297 and Asp324 each coordinate substrate. The active-site Proton acceptor is Lys349. Residues 376 to 379 (SHRS) and Lys400 each bind substrate.

Belongs to the enolase family. Homodimer. Mg(2+) is required as a cofactor.

It localises to the cytoplasm. It catalyses the reaction (2R)-2-phosphoglycerate = phosphoenolpyruvate + H2O. It participates in carbohydrate degradation; glycolysis; pyruvate from D-glyceraldehyde 3-phosphate: step 4/5. In Candida albicans (strain SC5314 / ATCC MYA-2876) (Yeast), this protein is Enolase 1 (ENO1).